Consider the following 29-residue polypeptide: GLPICGETCFTGTCYTPGCTCSYPVCKKN.

Residues 1 to 29 constitute a cross-link (cyclopeptide (Gly-Asn)); sequence GLPICGETCFTGTCYTPGCTCSYPVCKKN. 3 cysteine pairs are disulfide-bonded: C5-C19, C9-C21, and C14-C26.

In terms of processing, contains 3 disulfide bonds. This is a cyclic peptide. As to expression, expressed in root nodules but not in seed.

Probably participates in a plant defense mechanism. This chain is Cliotide T18, found in Clitoria ternatea (Butterfly pea).